A 343-amino-acid chain; its full sequence is MESKYKEILLLTGLDNITDEELDRFKFFLSDEFNIATGKLHTANRIQVATLMIQNAGAVSAVMKTIRIFQKLNYMLLAKRLQEEKEKVDKQYKSVTKPKPLSQAEMSPAASAAIRNDVAKQRAAPKVSPHVKPEQKQMVAQQESIREGFQKRCLPVMVLKAKKPFTFETQEGKQEMFHATVATEKEFFFVKVFNTLLKDKFIPKRIIIIARYYRHSGFLEVNSASRVLDAESDQKVNVPLNIIRKAGETPKINTLQTQPLGTIVNGLFVVQKVTEKKKNILFDLSDNTGKMEVLGVRNEDTMKCKEGDKVRLTFFTLSKNGEKLQLTSGVHSTIKVIKAKKKT.

The Pyrin domain maps to 1–87 (MESKYKEILL…AKRLQEEKEK (87 aa)). The HIN-200 domain occupies 138–337 (MVAQQESIRE…SGVHSTIKVI (200 aa)).

The protein belongs to the HIN-200 family. In terms of assembly, self-associates; forms homooligomers in response to cytosolic double-stranded DNA (dsDNA) and the dsDNA seems to serve as oligomerization platform. Component of AIM2 inflammasome, which consists of a signal sensor component (AIM2), an adapter (PYCARD/ASC), which recruits an effector pro-inflammatory caspase (CASP1). Interacts (via pyrin domain) with PYCARD/ASC (via pyrin domain); interaction is direct. Component of the AIM2 PANoptosome complex, a multiprotein complex that drives inflammatory cell death (PANoptosis). Interacts with PYDC5; disrupts assembly of the AIM2 inflammasome complex. Interacts with EIF2AK2/PKR. Interacts with MAPRE1. Interacts with IFI16. Interacts with isoform IFI16-beta of IFI16; preventing the interaction between AIM2 and PYCARD/ASC. Interacts with RACK1; promoting association with PP2A phosphatase and dephosphorylation of AKT1. Interacts with TRIM11; promoting AIM2 recruitment to autophagosomes and autophagy-dependent degradation. As to quaternary structure, (Microbial infection) Interacts with human herpesvirus 8 protein SOX/ORF37; this interaction inhibits AIM2 polymerization and subsequent inflammasome activation. In terms of processing, degraded via selective autophagy following interaction with TRIM11. In terms of tissue distribution, expressed in spleen, small intestine, peripheral blood leukocytes, and testis.

The protein localises to the cytoplasm. It is found in the inflammasome. Its subcellular location is the nucleus. With respect to regulation, inactive in absence of double-stranded DNA (dsDNA). Homooligomerizes upon binding to dsDNA, dsDNA serving as an oligomerization platform. AIM2 requires large dsDNA to generate a structural template that couples dsDNA ligand-binding and homooligomerization. Homooligomerization is followed by recruitment of PYCARD/ASC to initiate speck formation (nucleation). AIM2 and PYCARD/ASC homooligomer filaments assemble bidirectionally and the recognition between AIM2 and PYCARD/ASC oligomers occurs in a head-to-tail manner. Clustered PYCARD/ASC nucleates the formation of CASP1 filaments through the interaction of their respective CARD domains, acting as a platform for CASP1 polymerization and activation. Active CASP1 then specifically processes protein precursors, such as gasdermin-D (GSDMD), IL1B and IL18, leading to the release of mature cytokines in the extracellular milieu or pyroptosis, depending on cell type. AIM2 can be activated in response to events that cause genomic DNA (HIV protease inhibitor nelfinavir) or mitochondrial DNA release in the cytoplasm (such as Perfluoroalkyl substance pollutants or cholesterol overload). Activation of the AIM2 inflammasome is inhibited by isoform IFI16-beta of IFI16, which prevents the interaction between AIM2 and PYCARD/ASC. Activation of the AIM2 inflammasome is inhibited by TRIM11, which promotes autophagy-dependent degradation of AIM2. In terms of biological role, sensor component of the AIM2 inflammasome, which mediates inflammasome activation in response to the presence of double-stranded DNA (dsDNA) in the cytosol, leading to subsequent pyroptosis. Inflammasomes are supramolecular complexes that assemble in the cytosol in response to pathogens and other damage-associated signals and play critical roles in innate immunity and inflammation. Acts as a recognition receptor (PRR): specifically recognizes and binds dsDNA in the cytosol, and mediates the formation of the inflammasome polymeric complex composed of AIM2, CASP1 and PYCARD/ASC. Recruitment of pro-caspase-1 (proCASP1) to the AIM2 inflammasome promotes caspase-1 (CASP1) activation, which subsequently cleaves and activates inflammatory cytokines IL1B and IL18 and gasdermin-D (GSDMD), promoting cytokine secretion. In some cells, CASP1 activation mediates cleavage and activation of GSDMD, triggering pyroptosis without promoting cytokine secretion. Detects cytosolic dsDNA of viral and bacterial origin in a non-sequence-specific manner. Involved in the DNA damage response caused by acute ionizing radiation by mediating pyroptosis of intestinal epithelial cells and bone marrow cells in response to double-strand DNA breaks. Mechanistically, AIM2 senses DNA damage in the nucleus to mediate inflammasome assembly and inflammatory cell death. Also acts as a regulator of neurodevelopment via its role in the DNA damage response: acts by promoting neural cell death in response to DNA damage in the developing brain, thereby purging genetically compromised cells of the central nervous system. Pyroptosis mediated by the AIM2 inflammasome in response to DNA damage is dependent on GSDMD without involving IL1B and IL18 cytokine secretion. Also acts as a mediator of pyroptosis, necroptosis and apoptosis (PANoptosis), an integral part of host defense against pathogens, in response to bacterial infection. Can also trigger PYCARD/ASC-dependent, caspase-1-independent cell death that involves caspase-8 (CASP8). Also acts as a tumor suppressor independently of its role in inflammatory response. Able to suppress overt cell proliferation in enterocytes: restricts stem cell proliferation in the intestinal mucosa in an inflammasome-independent manner, contributing to a decrease in the likelihood of colorectal cancer development. AIM2 suppresses cell proliferation by inhibiting phosphorylation of AKT1 at 'Ser-473', preventing AKT1 activation and AKT-mTOR signaling pathway. Inhibits AKT1 phosphorylation both by inhibiting the activity of PRKDC/DNA-PK kinase and promoting dephosphorylation by PP2A phosphatase. Also acts as a key regulator of regulatory T-cells (Treg) homeostasis by promoting their stability: acts by preventing AKT1 activation. Its role in Treg homeostasis is important to restain autoimmune diseases. This chain is Interferon-inducible protein AIM2, found in Homo sapiens (Human).